A 759-amino-acid polypeptide reads, in one-letter code: LPS-assembly protein LptD (759 aa).

An N-terminal signal peptide occupies residues methionine 1–alanine 22.

This sequence belongs to the LptD family. As to quaternary structure, component of the lipopolysaccharide transport and assembly complex. Interacts with LptE and LptA.

It is found in the cell outer membrane. Functionally, together with LptE, is involved in the assembly of lipopolysaccharide (LPS) at the surface of the outer membrane. In Alcanivorax borkumensis (strain ATCC 700651 / DSM 11573 / NCIMB 13689 / SK2), this protein is LPS-assembly protein LptD.